The chain runs to 418 residues: Cell division protein FtsA (418 aa).

Belongs to the FtsA/MreB family. As to quaternary structure, self-interacts. Interacts with FtsZ.

It is found in the cell inner membrane. Functionally, cell division protein that is involved in the assembly of the Z ring. May serve as a membrane anchor for the Z ring. The chain is Cell division protein FtsA from Buchnera aphidicola subsp. Schizaphis graminum (strain Sg).